The primary structure comprises 173 residues: Large ribosomal subunit protein bL12m (173 aa).

Residues 1–33 (MFRIASRQTRNLRALSSSKNWARSLVNTRSFRA) constitute a mitochondrion transit peptide.

It belongs to the bacterial ribosomal protein bL12 family. In terms of assembly, component of the mitochondrial large ribosomal subunit (mt-LSU). Mature yeast 74S mitochondrial ribosomes consist of a small (37S) and a large (54S) subunit. The 37S small subunit contains a 15S ribosomal RNA (15S mt-rRNA) and at least 32 different proteins. The 54S large subunit contains a 21S rRNA (21S mt-rRNA) and at least 45 different proteins.

The protein resides in the mitochondrion. Component of the mitochondrial ribosome (mitoribosome), a dedicated translation machinery responsible for the synthesis of mitochondrial genome-encoded proteins, including at least some of the essential transmembrane subunits of the mitochondrial respiratory chain. The mitoribosomes are attached to the mitochondrial inner membrane and translation products are cotranslationally integrated into the membrane. This is Large ribosomal subunit protein bL12m (mrpl12) from Schizosaccharomyces pombe (strain 972 / ATCC 24843) (Fission yeast).